The sequence spans 1364 residues: RecQ-like DNA helicase BLM (1364 aa).

Disordered regions lie at residues 108–131 and 147–174; these read VHGN…TGIN and DDFD…KNTS. The interval 328 to 377 is necessary for dimerization and homooligomerization; it reads DSKVPSQLLTLMLEICDLVDKIPISELHVLSCGLDLKKKRDMRKRLLSND. Disordered stretches follow at residues 380 to 416, 484 to 515, and 535 to 580; these read FRSS…ESLS, RFNT…NPDL, and SPAA…SLLS. Residues 387–399 show a composition bias toward low complexity; that stretch reads SSTVSLTSCTSST. Residues 484 to 503 are compositionally biased toward polar residues; the sequence is RFNTPQNEKPISSSTCTRPY. Basic and acidic residues predominate over residues 555 to 566; the sequence is AQLDSRNKEKNT. Over residues 567–580 the composition is skewed to polar residues; that stretch reads RNNTGDTTNPSLLS. Residues 620 to 624 and 644 to 648 contribute to the ATP site; these read FRTNQ and GGGKS. Residues 628–803 form the Helicase ATP-binding domain; that stretch reads INACLCGEDC…LNQLKMTKPQ (176 aa). A DEAH box motif is present at residues 747–750; it reads DEAH. 2 3' overhang DNA-binding regions span residues 822–825 and 849–851; these read KPKR and SRH. In terms of domain architecture, Helicase C-terminal spans 829 to 976; that stretch reads DCVEWIKKHH…TKQTHFNNLY (148 aa). Arg934 is an ATP binding site. A 3' overhang DNA-binding region spans residues 952–955; it reads RIRR. 4 residues coordinate Zn(2+): Cys988, Cys1007, Cys1015, and Cys1018. Residues 1046–1090 form a DNA Holliday junction binding region; it reads LVQGRGKGRSNNTRLTLNMMVDIFLGSKSAKIQTGLFGKGAAYSR. 3' overhang DNA-binding stretches follow at residues 1061 to 1063, 1072 to 1076, and 1111 to 1117; these read TLN, SKSAK, and YITFNDQ. The HRDC domain maps to 1164-1244; it reads EEMVKKCQAE…QKYSEWTLPV (81 aa). The tract at residues 1179 to 1196 is necessary for ssDNA and DNA Holliday junction binding; that stretch reads KRLGKIFGVHYFNIFNTA. Position 1194 (Asn1194) interacts with ATP. The segment at 1251–1364 is disordered; it reads SGGPANVSAR…RFLKPSYSMF (114 aa). Positions 1273–1282 are enriched in polar residues; that stretch reads KSSYFSSNNK. Over residues 1283-1300 the composition is skewed to basic residues; it reads KGPKRKNSSYFGKSKKRK. Residues 1285–1301 carry the Nuclear localization signal motif; sequence PKRKNSSYFGKSKKRKT. Polar residues predominate over residues 1306-1335; that stretch reads QQSRSKNGNSSYARKNSTAKTSSSYISGSK.

This sequence belongs to the helicase family. RecQ subfamily. In terms of assembly, monomer. Homodimer (via N-terminus). Homotetramer (via N-terminus); dimer of dimers. Homohexamer (via N-terminus). Self-association negatively regulates DNA unwinding amplitude and rate. Oligomer complexes dissociate into monomer in presence of ATP. Zn(2+) serves as cofactor.

It localises to the nucleus. The catalysed reaction is Couples ATP hydrolysis with the unwinding of duplex DNA by translocating in the 3'-5' direction.. It catalyses the reaction ATP + H2O = ADP + phosphate + H(+). ATP-dependent DNA helicase that unwinds single- and double-stranded DNA in a 3'-5' direction. Participates in DNA replication and repair. Involved in 5'-end resection of DNA during double-strand break (DSB) repair. Negatively regulates sister chromatid exchange (SCE). Stimulates DNA 4-way junction branch migration and DNA Holliday junction dissolution. Binds single-stranded DNA (ssDNA), forked duplex DNA and DNA Holliday junction. The sequence is that of RecQ-like DNA helicase BLM (blm) from Xenopus laevis (African clawed frog).